The sequence spans 287 residues: MGTRSYRPYTPSTRQVTISDFAEITKTEPEKSLTVYKHRAKGRNNQGRITSRRRGGGHKRLYRIIDFKRDKRSIPATVIAIEYDPNRNARIALVSYEDGEKRYILHPNNLKVGTVIIAGPESPIEDGNALPLANIPLGTSVHNVELKAGKGGQIVRSAGATAQVVAKEGNYVTLKLPSGEVRLIRRECYATIGQVGNTDARNLSAGKAGRNRWKGRRPKVRGSVMNPVDHPHGGGEGRAPIGRSGPVTPWGKPTLGAKTRKPKKASSKLIIRRRRKSSKRGRGGRES.

A disordered region spans residues 203–287 (LSAGKAGRNR…SKRGRGGRES (85 aa)). 2 stretches are compositionally biased toward basic residues: residues 209–220 (GRNRWKGRRPKV) and 258–287 (KTRK…GRES).

Belongs to the universal ribosomal protein uL2 family. As to quaternary structure, part of the 50S ribosomal subunit. Forms a bridge to the 30S subunit in the 70S ribosome.

Functionally, one of the primary rRNA binding proteins. Required for association of the 30S and 50S subunits to form the 70S ribosome, for tRNA binding and peptide bond formation. It has been suggested to have peptidyltransferase activity; this is somewhat controversial. Makes several contacts with the 16S rRNA in the 70S ribosome. This chain is Large ribosomal subunit protein uL2, found in Nostoc sp. (strain PCC 7120 / SAG 25.82 / UTEX 2576).